The following is a 314-amino-acid chain: Methionyl-tRNA formyltransferase (314 aa).

109-112 (SLLP) serves as a coordination point for (6S)-5,6,7,8-tetrahydrofolate.

The protein belongs to the Fmt family.

The catalysed reaction is L-methionyl-tRNA(fMet) + (6R)-10-formyltetrahydrofolate = N-formyl-L-methionyl-tRNA(fMet) + (6S)-5,6,7,8-tetrahydrofolate + H(+). In terms of biological role, attaches a formyl group to the free amino group of methionyl-tRNA(fMet). The formyl group appears to play a dual role in the initiator identity of N-formylmethionyl-tRNA by promoting its recognition by IF2 and preventing the misappropriation of this tRNA by the elongation apparatus. The polypeptide is Methionyl-tRNA formyltransferase (Alkaliphilus metalliredigens (strain QYMF)).